We begin with the raw amino-acid sequence, 725 residues long: Methionine--tRNA ligase (725 aa).

The 'HIGH' region signature appears at proline 27–histidine 37. Zn(2+)-binding residues include cysteine 158, cysteine 161, cysteine 171, and cysteine 174. Residues lysine 348–serine 352 carry the 'KMSKS' region motif. Position 351 (lysine 351) interacts with ATP. In terms of domain architecture, tRNA-binding spans aspartate 619 to lysine 725.

It belongs to the class-I aminoacyl-tRNA synthetase family. MetG type 1 subfamily. As to quaternary structure, homodimer. The cofactor is Zn(2+).

It is found in the cytoplasm. The enzyme catalyses tRNA(Met) + L-methionine + ATP = L-methionyl-tRNA(Met) + AMP + diphosphate. Is required not only for elongation of protein synthesis but also for the initiation of all mRNA translation through initiator tRNA(fMet) aminoacylation. In Burkholderia mallei (strain NCTC 10247), this protein is Methionine--tRNA ligase.